Reading from the N-terminus, the 107-residue chain is Ferredoxin-6 (107 aa).

Residues 2 to 106 form the 2Fe-2S ferredoxin-type domain; the sequence is AKIIFIEHNG…GLVVHLPEKQ (105 aa). 4 residues coordinate [2Fe-2S] cluster: cysteine 40, cysteine 46, cysteine 49, and cysteine 87.

Belongs to the adrenodoxin/putidaredoxin family. [2Fe-2S] cluster is required as a cofactor.

In terms of biological role, ferredoxins are small electron carrier proteins that participate in various redox reactions. FdVI is an essential protein required for growth of R.capsulatus. May be involved in Fe-S cluster assembly. In Rhodobacter capsulatus (Rhodopseudomonas capsulata), this protein is Ferredoxin-6.